Reading from the N-terminus, the 292-residue chain is MAQHDQLHRYLFENYAVRGELVTVSETWKQILENHDYPMPVKTLLGELLVATSLLTATLKFAGDITVQLQGDGPMTLAVINGNNRQQMRGVARVQGDVPADADLKTLVGNGYLVITITPEEGERYQGVVGLEGDTLAACLEDYFMRSEQLPTRLFIRTGEAQGQPAAGGMLLQVLPAQDAQTDDFNHLATLTETIKADELFTLPANDVLWRLYHEEEVTVYDPQAVEFKCTCSRERCADALRTLPDEEVAQILEEDGEVDMHCDYCGTHYVFDAMDIAGIRKNASPADPQVH.

2 disulfide bridges follow: cysteine 230-cysteine 232 and cysteine 263-cysteine 266.

The protein belongs to the HSP33 family. Post-translationally, under oxidizing conditions two disulfide bonds are formed involving the reactive cysteines. Under reducing conditions zinc is bound to the reactive cysteines and the protein is inactive.

It localises to the cytoplasm. Redox regulated molecular chaperone. Protects both thermally unfolding and oxidatively damaged proteins from irreversible aggregation. Plays an important role in the bacterial defense system toward oxidative stress. The polypeptide is 33 kDa chaperonin (Cronobacter sakazakii (strain ATCC BAA-894) (Enterobacter sakazakii)).